A 747-amino-acid polypeptide reads, in one-letter code: Protein O-mannosyl-transferase 1 (747 aa).

9 helical membrane-spanning segments follow: residues Pro8 to Leu28, Val40 to Phe60, Phe68 to Trp88, Val99 to Ala119, Ile122 to Ile142, Leu154 to Phe174, Ser183 to Ile203, Met206 to Leu226, and Leu269 to Phe289. MIR domains are found at residues Pro318–Pro381, Pro392–Val449, and Ser453–His513. N-linked (GlcNAc...) asparagine glycosylation is found at Asn435, Asn471, and Asn539. 3 consecutive transmembrane segments (helical) span residues Ile597–Tyr617, Trp636–Leu656, and Leu661–Leu681.

The protein belongs to the glycosyltransferase 39 family. Interacts with POMT2. Widely expressed. Highly expressed in testis, heart and pancreas. Detected at lower levels in kidney, skeletal muscle, brain, placenta, lung and liver.

It is found in the endoplasmic reticulum membrane. The enzyme catalyses a di-trans,poly-cis-dolichyl beta-D-mannosyl phosphate + L-seryl-[protein] = 3-O-(alpha-D-mannosyl)-L-seryl-[protein] + a di-trans,poly-cis-dolichyl phosphate + H(+). It carries out the reaction a di-trans,poly-cis-dolichyl beta-D-mannosyl phosphate + L-threonyl-[protein] = 3-O-(alpha-D-mannosyl)-L-threonyl-[protein] + a di-trans,poly-cis-dolichyl phosphate + H(+). The protein operates within protein modification; protein glycosylation. Slightly activated by Mg(2+) and inhibited by both Ca(+) and Mn(2+). EDTA ha no effect on activity in vitro. Its function is as follows. Transfers mannosyl residues to the hydroxyl group of serine or threonine residues. Coexpression of both POMT1 and POMT2 is necessary for enzyme activity, expression of either POMT1 or POMT2 alone is insufficient. Essentially dedicated to O-mannosylation of alpha-DAG1 and few other proteins but not of cadherins and protocaherins. The chain is Protein O-mannosyl-transferase 1 (POMT1) from Homo sapiens (Human).